We begin with the raw amino-acid sequence, 43 residues long: Protein PsbN (43 aa).

The helical transmembrane segment at 5 to 25 (TLISVFVASLVIGITAYAIFV) threads the bilayer.

The protein belongs to the PsbN family.

The protein localises to the plastid. It localises to the chloroplast thylakoid membrane. May play a role in photosystem I and II biogenesis. This Cyanidioschyzon merolae (strain NIES-3377 / 10D) (Unicellular red alga) protein is Protein PsbN.